A 659-amino-acid polypeptide reads, in one-letter code: MEYYTSKEVAEWLKSIGLEKYIEQFSQNNIEGRHLNHLTLPLLKDLGIENTAKGKQFLKQRDYLREFPRPCILRFIACNGQTRAVQSRGDYQKTLAIALKKFSLEDASKFIVCVSQSSRIKLITEEEFKQICFNSSSPERDRLIIVPKEKPCPSFEDLRRSWEIELAQPAALSSQSSLSPKLSSVLPTSTQKRSVRSNNAKPFESYQRPPSELINSRISDFFPDHQPKLLEKTISNSLRRNLSIRTSQGHNLGNFGQEILPRSSRRARPSELVCPLSSLRISVAEDVNRLPRIDRGFDPPLTVSSTQRISRPPSLQKSITMVGVEPLYQSNGNEKSSKYNVFSESAHGNHQVLSFSPGSSPSFIEQPSPISPTSTTSEDTNTLEEDTDDQSIKWIRGALIGSGSFGQVYLGMNASSGELMAVKQVILDSVSESKDRHAKLLDALAGEIALLQELSHEHIVQYLGSNLNSDHLNIFLEYVPGGSVAGLLTMYGSFEETLVKNFIKQTLKGLEYLHSRGIVHRDIKGANILVDNKGKIKISDFGISKKLELNSTSTKTGGARPSFQGSSFWMAPEVVKQTMHTEKTDIWSLGCLVIEMLTSKHPYPNCDQMQAIFRIGENILPEFPSNISSSAIDFLEKTFAIDCNLRPTASELLSHPFVS.

One can recognise an SAM domain in the interval 4 to 67 (YTSKEVAEWL…LKQRDYLREF (64 aa)). Residues 180 to 190 (PKLSSVLPTST) show a composition bias toward low complexity. Disordered stretches follow at residues 180 to 209 (PKLS…YQRP) and 354 to 387 (SFSP…EEDT). Residues 354-365 (SFSPGSSPSFIE) show a composition bias toward polar residues. Residues 367–380 (PSPISPTSTTSEDT) are compositionally biased toward low complexity. A Protein kinase domain is found at 394-658 (WIRGALIGSG…ASELLSHPFV (265 aa)). Residues 400–408 (IGSGSFGQV) and Lys-423 contribute to the ATP site. Asp-522 serves as the catalytic Proton acceptor.

Belongs to the protein kinase superfamily. STE Ser/Thr protein kinase family. MAP kinase kinase kinase subfamily. As to quaternary structure, interacts with rad24 and rad25; these prevent its translocation to the cell membrane during nitrogen starvation.

It is found in the cytoplasm. It localises to the cell membrane. It catalyses the reaction L-seryl-[protein] + ATP = O-phospho-L-seryl-[protein] + ADP + H(+). It carries out the reaction L-threonyl-[protein] + ATP = O-phospho-L-threonyl-[protein] + ADP + H(+). Functionally, serine/threonine protein kinase involved in conjugation and sporulation. It is thought that it phosphorylates the byr1 protein kinase which itself phosphorylate the spk1 kinase. This Schizosaccharomyces pombe (strain 972 / ATCC 24843) (Fission yeast) protein is Protein kinase byr2.